Here is a 396-residue protein sequence, read N- to C-terminus: Activity-regulated cytoskeleton-associated protein (396 aa).

Residues 54 to 78 (SKQVERELKGLHRSVGKLESNLDGY) adopt a coiled-coil conformation. The tract at residues 89–100 (KSIKACLCRCQE) is interaction with SH3GL1 or SH3GL3. The tract at residues 195–214 (QPWVPGEDGQPSPGVDTQIF) is interaction with DNM2. A Phosphoserine modification is found at S260. Residues K268 and K269 each participate in a glycyl lysine isopeptide (Lys-Gly) (interchain with G-Cter in ubiquitin) cross-link. T278 bears the Phosphothreonine mark. A disordered region spans residues 356–396 (QDDLEQAAEPAGPHLPVEDEAETLTPAPNSESVASDRTQPE). Residues 381 to 396 (PAPNSESVASDRTQPE) are compositionally biased toward polar residues.

The protein belongs to the ARC/ARG3.1 family. In terms of assembly, homooligomer; homooligomerizes into virion-like capsids. Interacts with SH3GL1/endophilin-2, SH3GL3/endophilin-3 and DNM2/DYN2. Interacts with CAMK2B (in the kinase inactive state); leading to target ARC to inactive synapses. Interacts with PSEN1. Palmitoylation anchors the protein into the membrane by allowing direct insertion into the hydrophobic core of the lipid bilayer. In terms of processing, ubiquitinated by UBE3A, leading to its degradation by the proteasome, thereby promoting AMPA receptors (AMPARs) expression at synapses. Ubiquitinated by RNF216 at Lys-268 and Lys-269 limiting ARC protein levels induced by synaptic activity and thus regulating ARC-dependent forms of synaptic plasticity. Post-translationally, phosphorylation at Ser-260 by CaMK2 prevents homooligomerization into virion-like capsids by disrupting an interaction surface essential for high-order oligomerization. Phosphorylation by CaMK2 inhibits synaptic activity.

It is found in the extracellular vesicle membrane. Its subcellular location is the postsynaptic cell membrane. It localises to the synapse. The protein resides in the postsynaptic density. The protein localises to the early endosome membrane. It is found in the cell projection. Its subcellular location is the dendrite. It localises to the cytoplasm. The protein resides in the cytoskeleton. The protein localises to the cell cortex. It is found in the dendritic spine. Its subcellular location is the cytoplasmic vesicle. It localises to the secretory vesicle. The protein resides in the acrosome. The protein localises to the clathrin-coated vesicle membrane. Its function is as follows. Master regulator of synaptic plasticity that self-assembles into virion-like capsids that encapsulate RNAs and mediate intercellular RNA transfer in the nervous system. ARC protein is released from neurons in extracellular vesicles that mediate the transfer of ARC mRNA into new target cells, where ARC mRNA can undergo activity-dependent translation. ARC capsids are endocytosed and are able to transfer ARC mRNA into the cytoplasm of neurons. Acts as a key regulator of synaptic plasticity: required for protein synthesis-dependent forms of long-term potentiation (LTP) and depression (LTD) and for the formation of long-term memory. Regulates synaptic plasticity by promoting endocytosis of AMPA receptors (AMPARs) in response to synaptic activity: this endocytic pathway maintains levels of surface AMPARs in response to chronic changes in neuronal activity through synaptic scaling, thereby contributing to neuronal homeostasis. Acts as a postsynaptic mediator of activity-dependent synapse elimination in the developing cerebellum by mediating elimination of surplus climbing fiber synapses. Accumulates at weaker synapses, probably to prevent their undesired enhancement. This suggests that ARC-containing virion-like capsids may be required to eliminate synaptic material. Required to transduce experience into long-lasting changes in visual cortex plasticity and for long-term memory. Involved in postsynaptic trafficking and processing of amyloid-beta A4 (APP) via interaction with PSEN1. In addition to its role in synapses, also involved in the regulation of the immune system: specifically expressed in skin-migratory dendritic cells and regulates fast dendritic cell migration, thereby regulating T-cell activation. This is Activity-regulated cytoskeleton-associated protein from Homo sapiens (Human).